We begin with the raw amino-acid sequence, 100 residues long: Pregnancy-associated protein bPAP (100 aa).

The disordered stretch occupies residues 1-40; that stretch reads DSELAGPRGARGPHGLSGPHGLSGLXGPXGYTGPIGMXGL. The segment covering 13–29 has biased composition (low complexity); it reads PHGLSGPHGLSGLXGPX.

In terms of tissue distribution, detected at high levels in the urine of pregnant females (at protein level) and at far lower levels in the urine of nonpregnant females.

The sequence is that of Pregnancy-associated protein bPAP from Bos taurus (Bovine).